Consider the following 360-residue polypeptide: MARRRMGEEGKGGGWGLNGRQCRFGNRLRAVKGEGWRSAVAAQAATGRREEDDAGGREKGEKRERKGGLSPCLFGKRRRERRRGGRGRREALPPSLGGLRAERRGRGDDDVLINYNVQHVSRIKLEERLLITDKLSLRFLDPIFFGEYPREMREILSSNLPKFTPEEKKLLQNKVDFIGINQYTAIYAKDCIYSPCALNTYEGNALVYTTGVRNGAKIGKPTAFSTYFVVPESIESAVMYVNGRYKDTTIYITENGYSQHSDTNMEDLINDVERVNYLQGYLKYLSSAVRKGANVGGYFMWSLIDNFEWVFGYTIKFGLYHVDFDTQERIPKMSAKWYRDFLTGSNVTDDTQVWSRRADS.

2 stretches are compositionally biased toward basic and acidic residues: residues 1-11 (MARRRMGEEGK) and 47-67 (GRRE…ERKG). Disordered regions lie at residues 1–21 (MARR…NGRQ) and 35–103 (GWRS…RAER). Basic residues predominate over residues 75-86 (GKRRRERRRGGR). A beta-D-glucoside is bound at residue Y183. An intrachain disulfide couples C191 to C196. Residues E254, W301, 308-309 (EW), and F317 each bind a beta-D-glucoside. E254 functions as the Nucleophile in the catalytic mechanism. N346 is a glycosylation site (N-linked (GlcNAc...) asparagine).

The protein belongs to the glycosyl hydrolase 1 family.

The enzyme catalyses Hydrolysis of terminal, non-reducing beta-D-glucosyl residues with release of beta-D-glucose.. This Oryza sativa subsp. japonica (Rice) protein is Putative beta-glucosidase 15 (BGLU15).